The sequence spans 373 residues: MKSSTFGMLALAAAAKLVSAHTTVHAVWINDVDQGEGNSQSGYIRSPPSNSPITDVTSKDMTCNVNNKATAKTLEVKAGDKITFEWHHDSRSESDDIIASSHNGPILVYMAPTEKGTAGNGWVKIAEDGYTDGTWAVETLIKNRGKHSVTVPDVAAGEYLFRPEIIALHEGNREGGAQFYMECVQVKVTSSGSKTLPEGVSIPGAYTATDKGILFNIYDSFDSYPIPGPAVWDGASGSSSSSSSSASASAPAPTSAAPAPSSFTTIAKQPATSSSTEAPSTENTPSETTSTTSAIVSTTAVASTTAPATPSTTSAIASSAAPTNSVPQPSSNAGGAVKEWYQCGGLNYSGSTQCEEGLTCKKWNPYYHQCVSA.

Residues 1 to 20 form the signal peptide; sequence MKSSTFGMLALAAAAKLVSA. Histidine 21 provides a ligand contact to Cu(2+). The segment at 36–55 is disordered; the sequence is EGNSQSGYIRSPPSNSPITD. Cysteines 63 and 183 form a disulfide. Histidine 102 serves as a coordination point for Cu(2+). O2 is bound by residues histidine 169 and glutamine 178. Position 180 (tyrosine 180) interacts with Cu(2+). Residues 234 to 333 form a disordered region; the sequence is GASGSSSSSS…NSVPQPSSNA (100 aa). Low complexity-rich tracts occupy residues 235 to 262 and 270 to 323; these read ASGSSSSSSSSASASAPAPTSAAPAPSS and PATS…AAPT. Over residues 324–333 the composition is skewed to polar residues; that stretch reads NSVPQPSSNA. In terms of domain architecture, CBM1 spans 335–371; it reads GAVKEWYQCGGLNYSGSTQCEEGLTCKKWNPYYHQCV. Residue asparagine 347 is glycosylated (N-linked (GlcNAc...) asparagine).

The protein belongs to the polysaccharide monooxygenase AA9 family. Requires Cu(2+) as cofactor.

It localises to the secreted. The catalysed reaction is [(1-&gt;4)-beta-D-glucosyl]n+m + reduced acceptor + O2 = 4-dehydro-beta-D-glucosyl-[(1-&gt;4)-beta-D-glucosyl]n-1 + [(1-&gt;4)-beta-D-glucosyl]m + acceptor + H2O.. In terms of biological role, lytic polysaccharide monooxygenase (LPMO) that depolymerizes crystalline and amorphous polysaccharides via the oxidation of scissile alpha- or beta-(1-4)-glycosidic bonds, yielding exclusively C4 oxidation products. Catalysis by LPMOs requires the reduction of the active-site copper from Cu(II) to Cu(I) by a reducing agent and H(2)O(2) or O(2) as a cosubstrate. In addition to cellulose, also cleaves the beta-(1!4)-glucan backbone of tamarind xyloglucan, but only next to unsubstituted glucosyl units. The protein is AA9 family lytic polysaccharide monooxygenase A of Aspergillus tamarii.